The following is a 361-amino-acid chain: Chorismate synthase (361 aa).

Positions 48 and 54 each coordinate NADP(+). Residues 125–127 (RSS), 238–239 (NA), Gly-278, 293–297 (KPTSS), and Arg-319 contribute to the FMN site.

The protein belongs to the chorismate synthase family. Homotetramer. Requires FMNH2 as cofactor.

The catalysed reaction is 5-O-(1-carboxyvinyl)-3-phosphoshikimate = chorismate + phosphate. The protein operates within metabolic intermediate biosynthesis; chorismate biosynthesis; chorismate from D-erythrose 4-phosphate and phosphoenolpyruvate: step 7/7. Catalyzes the anti-1,4-elimination of the C-3 phosphate and the C-6 proR hydrogen from 5-enolpyruvylshikimate-3-phosphate (EPSP) to yield chorismate, which is the branch point compound that serves as the starting substrate for the three terminal pathways of aromatic amino acid biosynthesis. This reaction introduces a second double bond into the aromatic ring system. The protein is Chorismate synthase of Salmonella paratyphi A (strain ATCC 9150 / SARB42).